Consider the following 304-residue polypeptide: UTP--glucose-1-phosphate uridylyltransferase 1 (304 aa).

It belongs to the UDPGP type 2 family.

The catalysed reaction is alpha-D-glucose 1-phosphate + UTP + H(+) = UDP-alpha-D-glucose + diphosphate. It functions in the pathway carbohydrate metabolism; nucleotide-sugar metabolism. The protein is UTP--glucose-1-phosphate uridylyltransferase 1 (hasC1) of Streptococcus pyogenes serotype M18 (strain MGAS8232).